Here is a 1986-residue protein sequence, read N- to C-terminus: Protein Shroom3 (1986 aa).

The interval 1–21 is disordered; it reads MKTPENLEEPSATPNPSRTPT. A PDZ domain is found at 24–109; it reads FVYLEALLEG…TLRLVVRRDV (86 aa). Disordered regions lie at residues 152 to 199, 211 to 239, 265 to 285, 342 to 463, and 564 to 1055; these read CSEP…SSTS, RSPD…LLSP, TSSS…RSGS, QGCA…QPLL, and NEDS…RRIF. The residue at position 212 (serine 212) is a Phosphoserine. 2 stretches are compositionally biased toward polar residues: residues 357–376 and 415–425; these read PSPS…TDNL and PQTNSSGSQKT. Over residues 430–440 the composition is skewed to basic and acidic residues; the sequence is DQLHTVPERSP. A phosphoserine mark is found at serine 439 and serine 443. The segment covering 595–607 has biased composition (polar residues); it reads ACSNHHSLSSPQA. Over residues 630-645 the composition is skewed to basic and acidic residues; sequence QEDHNANLRQKVEREG. Over residues 653 to 677 the composition is skewed to polar residues; it reads NSGRTRSAFSSLQNIPESLRRQSNV. The span at 747 to 761 shows a compositional bias: low complexity; that stretch reads SGASQRRLSSSSSAA. The span at 774-785 shows a compositional bias: basic and acidic residues; sequence KVSRIEEREQGR. Composition is skewed to low complexity over residues 796-814 and 865-874; these read YGPG…TSSS and DGRGPPARGG. Serine 888 is subject to Phosphoserine. The segment covering 895–908 has biased composition (basic and acidic residues); it reads EAEREASWSEDRPG. Threonine 909 bears the Phosphothreonine mark. A phosphoserine mark is found at serine 912 and serine 969. One can recognise an ASD1 domain in the interval 927–1023; the sequence is IKDAQSRVLG…SEPEKMNEVG (97 aa). The span at 1004 to 1020 shows a compositional bias: basic and acidic residues; the sequence is LTVEQKKRSYSEPEKMN. Phosphoserine occurs at positions 1063 and 1066. Disordered regions lie at residues 1083-1102, 1107-1223, 1304-1425, and 1446-1654; these read YIQR…PEAG, AQSA…AEDL, ATVA…PPWV, and ANLK…KTSE. The segment covering 1114 to 1127 has biased composition (low complexity); it reads AGPAAPDGPGLASA. The segment covering 1134–1146 has biased composition (basic and acidic residues); the sequence is REPEALPRKEHTH. Residues tryptophan 1175, valine 1179, and serine 1219 each carry the phosphoserine modification. Over residues 1307 to 1318 the composition is skewed to low complexity; that stretch reads ASSAPPESSGAA. Serine 1350 and serine 1354 each carry phosphoserine. A compositionally biased stretch (polar residues) spans 1366–1399; that stretch reads YRSQLAMDQQTGQQPPSSPASAVTQPTSPRSPEL. The span at 1455-1469 shows a compositional bias: low complexity; sequence PSRPSSCSTSDPDTP. Pro residues predominate over residues 1513-1524; it reads LPPPPPPSPPSE. Over residues 1581–1630 the composition is skewed to polar residues; it reads EGSQIMTATPPQTSAKGSEAESNTPSSASAQPQLNGSPGKQLCPSQTRNL. A compositionally biased stretch (basic and acidic residues) spans 1634–1654; sequence PVERTQDLGKKTHAEPQKTSE. Positions 1659–1947 constitute an ASD2 domain; it reads EALAKEIVHQ…QVRCLLESLP (289 aa). The stretch at 1844–1890 forms a coiled coil; the sequence is RLARVENVLRGLGEDASKEERSSLNEKRKVLAGQHEDARELKENLDR.

This sequence belongs to the shroom family. In terms of assembly, interacts with F-actin. Interacts with ROCK1.

It localises to the cell junction. The protein resides in the adherens junction. The protein localises to the cytoplasm. Its subcellular location is the cytoskeleton. It is found in the apical cell membrane. Functionally, controls cell shape changes in the neuroepithelium during neural tube closure. Induces apical constriction in epithelial cells by promoting the apical accumulation of F-actin and myosin II, and probably by bundling stress fibers. Induces apicobasal cell elongation by redistributing gamma-tubulin and directing the assembly of robust apicobasal microtubule arrays. In Mus musculus (Mouse), this protein is Protein Shroom3 (Shroom3).